Reading from the N-terminus, the 508-residue chain is Photosystem II CP47 reaction center protein (508 aa).

Helical transmembrane passes span 21 to 36 (SVHIMHTALVAGWAGS), 101 to 115 (IVFSGLCFLAAIWHW), 140 to 156 (GIHLFLSGVACFGFGAF), 203 to 218 (IAAGTLGILAGLFHLS), 237 to 252 (VLSSSIAAVFFAAFVV), and 457 to 472 (SFALLFFFGHIWHGAR).

The protein belongs to the PsbB/PsbC family. PsbB subfamily. As to quaternary structure, PSII is composed of 1 copy each of membrane proteins PsbA, PsbB, PsbC, PsbD, PsbE, PsbF, PsbH, PsbI, PsbJ, PsbK, PsbL, PsbM, PsbT, PsbX, PsbY, PsbZ, Psb30/Ycf12, at least 3 peripheral proteins of the oxygen-evolving complex and a large number of cofactors. It forms dimeric complexes. Requires Binds multiple chlorophylls. PSII binds additional chlorophylls, carotenoids and specific lipids. as cofactor.

The protein localises to the plastid. It localises to the chloroplast thylakoid membrane. Its function is as follows. One of the components of the core complex of photosystem II (PSII). It binds chlorophyll and helps catalyze the primary light-induced photochemical processes of PSII. PSII is a light-driven water:plastoquinone oxidoreductase, using light energy to abstract electrons from H(2)O, generating O(2) and a proton gradient subsequently used for ATP formation. In Arabis hirsuta (Hairy rock-cress), this protein is Photosystem II CP47 reaction center protein.